Here is a 210-residue protein sequence, read N- to C-terminus: Glutathione S-transferase P 1 (210 aa).

The GST N-terminal domain occupies 2 to 81; the sequence is PPYTIVYFPV…HLGRSLGLYG (80 aa). Tyr4 is subject to Phosphotyrosine; by EGFR. Residues Tyr8, Arg14, Trp39, Lys45, and 52-53 each bind glutathione; that span reads QL. Thr62 carries the phosphothreonine modification. 65-66 is a glutathione binding site; the sequence is QS. Residues 83–204 form the GST C-terminal domain; that stretch reads NQREAAQMDM…SSPEHVNRPI (122 aa). 2 positions are modified to N6-succinyllysine: Lys103 and Lys116. Residue Lys128 is modified to N6-acetyllysine.

In terms of assembly, homodimer. Interacts with CDK5. Ubiquitously expressed.

It is found in the cytoplasm. It localises to the mitochondrion. The protein resides in the nucleus. The catalysed reaction is RX + glutathione = an S-substituted glutathione + a halide anion + H(+). It catalyses the reaction prostaglandin J2 + glutathione = prostaglandin J2-S-(R)-glutathione. The enzyme catalyses prostaglandin J2 + glutathione = prostaglandin J2-S-(S)-glutathione. It carries out the reaction prostaglandin A2 + glutathione = prostaglandin A2-S-(S)-glutathione. The catalysed reaction is 11(S)-hydroxy-14(S),15(S)-epoxy-(5Z,8Z,12E)-eicosatrienoate + glutathione = (11S,15S)-dihydroxy-14(R)-S-glutathionyl-(5Z,8Z,12E)-eicosatrienoate. Functionally, conjugation of reduced glutathione to a wide number of exogenous and endogenous hydrophobic electrophiles. Involved in the formation of glutathione conjugates of both prostaglandin A2 (PGA2) and prostaglandin J2 (PGJ2). Participates in the formation of novel hepoxilin regioisomers. Negatively regulates CDK5 activity via p25/p35 translocation to prevent neurodegeneration. The protein is Glutathione S-transferase P 1 of Mus musculus (Mouse).